Consider the following 735-residue polypeptide: Probable pre-mRNA-splicing factor ATP-dependent RNA helicase prp43 (735 aa).

Basic and acidic residues predominate over residues 1–12; the sequence is MEPAQKKLRQES. Residues 1 to 34 are disordered; the sequence is MEPAQKKLRQESKNPYLAHLNNGDDSEEVVSSKG. One can recognise a Helicase ATP-binding domain in the interval 85 to 250; the sequence is LKIYHENQII…FFDAPLLAVP (166 aa). Position 98–105 (98–105) interacts with ATP; it reads GETGSGKT. The DEAH box signature appears at 197-200; it reads DEAH. The Helicase C-terminal domain maps to 275 to 455; it reads TVLQIHVEEG…STVLELKKLG (181 aa).

This sequence belongs to the DEAD box helicase family. DEAH subfamily. DDX15/PRP43 sub-subfamily.

It localises to the nucleus. The enzyme catalyses ATP + H2O = ADP + phosphate + H(+). Functionally, pre-mRNA processing factor involved in disassembly of spliceosomes after the release of mature mRNA. The chain is Probable pre-mRNA-splicing factor ATP-dependent RNA helicase prp43 (prp43) from Schizosaccharomyces pombe (strain 972 / ATCC 24843) (Fission yeast).